A 1683-amino-acid polypeptide reads, in one-letter code: A-kinase anchor protein SPHKAP (1683 aa).

Polar residues-rich tracts occupy residues 1 to 14 (MDVN…SNVE) and 289 to 301 (AENT…NPSA). Disordered stretches follow at residues 1-30 (MDVN…ITSS), 275-320 (RMPS…ATNY), and 582-601 (LLPT…LVTE). The segment at 910-927 (FAEELAETVVSMATEIAA) is PKA-RII subunit binding domain. The interval 960–983 (LKRKKENSGTGSTVRKHKPPRLSE) is disordered. Residues serine 1006, serine 1066, serine 1088, serine 1101, serine 1102, serine 1105, serine 1240, and serine 1269 each carry the phosphoserine modification. Disordered stretches follow at residues 1359-1387 (VTEG…PTRE) and 1415-1518 (ETDQ…DTSS). Positions 1362-1371 (GNCSPVSSPS) are enriched in polar residues. A compositionally biased stretch (basic and acidic residues) spans 1469 to 1490 (LETREELEVDVLKEDITLDESR). Positions 1492–1504 (PPSSSEESTGSWS) are enriched in low complexity.

This sequence belongs to the AKAP110 family. Interacts (via the PKA-RII subunit binding domain) with the RI subunit of PKA. Interacts with SPHK1; the interaction greatly reduces SPHK1 activity. As to expression, abundant in heart ventricle (at protein level).

The protein localises to the cytoplasm. Functionally, anchoring protein that binds preferentially to the type I regulatory subunit of c-AMP-dependent protein kinase (PKA type I) and targets it to distinct subcellular compartments. May act as a converging factor linking cAMP and sphingosine signaling pathways. Plays a regulatory role in the modulation of SPHK1. In Rattus norvegicus (Rat), this protein is A-kinase anchor protein SPHKAP (Sphkap).